The sequence spans 88 residues: UPF0297 protein GTNG_2488 (88 aa).

The protein belongs to the UPF0297 family.

The chain is UPF0297 protein GTNG_2488 from Geobacillus thermodenitrificans (strain NG80-2).